The sequence spans 226 residues: Lipoprotein-releasing system ATP-binding protein LolD (226 aa).

The region spanning 6 to 226 is the ABC transporter domain; sequence LKLDNIRRAF…KMSEGLLVEV (221 aa). Position 42-49 (42-49) interacts with ATP; sequence GPSGAGKS.

The protein belongs to the ABC transporter superfamily. Lipoprotein translocase (TC 3.A.1.125) family. The complex is composed of two ATP-binding proteins (LolD) and two transmembrane proteins (LolC and LolE).

It localises to the cell inner membrane. Its function is as follows. Part of the ABC transporter complex LolCDE involved in the translocation of mature outer membrane-directed lipoproteins, from the inner membrane to the periplasmic chaperone, LolA. Responsible for the formation of the LolA-lipoprotein complex in an ATP-dependent manner. The protein is Lipoprotein-releasing system ATP-binding protein LolD of Paramagnetospirillum magneticum (strain ATCC 700264 / AMB-1) (Magnetospirillum magneticum).